Consider the following 587-residue polypeptide: Pentatricopeptide repeat-containing protein OGR1, mitochondrial (587 aa).

The N-terminal 30 residues, 1–30 (MSVSAAARHLESLLPRLASLRHYLQFHARL), are a transit peptide targeting the mitochondrion. PPR repeat units lie at residues 145 to 179 (DVRLLTTLLDSYAKCGDLASARKVFDEMTVRDVAT), 200 to 203 (FHRL), 217 to 251 (NEVTIVAALSACAQIGLLKDGMYVHEFAKRFGLDR), 252 to 286 (NVRVCNSLIDMYSKCGSLSRALDVFHSIKPEDQTL), 287 to 315 (VSYNAAIQAHSMHGHGGDALRLFDEMPTR), 319 to 349 (DGVTYLAVLCGCNHSGLVDDGLRVFNSMRVA), 351 to 381 (NMKHYGTIVDLLGRAGRLTEAYDTVISMPFP), and 383 to 417 (DIVLWQTLLGAAKMHGVVELAELAANKLAELGSNV). The type E motif stretch occupies residues 386–461 (LWQTLLGAAK…VPGFSYTEID (76 aa)). A type E(+) motif region spans residues 462–492 (GVMHKFINGDKEHPRWQEIYRALEDIVSRIS). The segment at 493-587 (ELGYEPETSN…DGQCSCRDYW (95 aa)) is type DYW motif.

Its subcellular location is the mitochondrion. Its function is as follows. Involved in multiple sites RNA editing events in mitochondria. Essential for C-to-U RNA editing at seven specific sites of nad2, nad4, cox2, cox3 and ccmC transcripts, all coding for proteins involved in the mitochondrial electron transport chain coupled to ATP generation. Required for normal growth and development. This chain is Pentatricopeptide repeat-containing protein OGR1, mitochondrial, found in Oryza sativa subsp. japonica (Rice).